A 590-amino-acid chain; its full sequence is Aspartate--tRNA(Asp/Asn) ligase (590 aa).

Glu-170 is a binding site for L-aspartate. Residues 194–197 (QLFK) form an aspartate region. Position 216 (Arg-216) interacts with L-aspartate. ATP is bound by residues 216-218 (RDE) and Gln-225. His-448 contacts L-aspartate. Glu-482 is an ATP binding site. Arg-489 is a binding site for L-aspartate. An ATP-binding site is contributed by 534-537 (GWDR). Residues 557 to 590 (SGGGADPLTGAPAPITPQQRRESGIDAKPKKDGE) are disordered. Over residues 575 to 590 (QRRESGIDAKPKKDGE) the composition is skewed to basic and acidic residues.

Belongs to the class-II aminoacyl-tRNA synthetase family. Type 1 subfamily. In terms of assembly, homodimer.

It is found in the cytoplasm. The enzyme catalyses tRNA(Asx) + L-aspartate + ATP = L-aspartyl-tRNA(Asx) + AMP + diphosphate. In terms of biological role, aspartyl-tRNA synthetase with relaxed tRNA specificity since it is able to aspartylate not only its cognate tRNA(Asp) but also tRNA(Asn). Reaction proceeds in two steps: L-aspartate is first activated by ATP to form Asp-AMP and then transferred to the acceptor end of tRNA(Asp/Asn). This is Aspartate--tRNA(Asp/Asn) ligase from Mycobacterium sp. (strain KMS).